Reading from the N-terminus, the 356-residue chain is Holliday junction branch migration complex subunit RuvB (356 aa).

The segment at 4–191 (TDKLATEQRI…FGIVARLEFY (188 aa)) is large ATPase domain (RuvB-L). ATP is bound by residues L30, R31, G72, K75, T76, T77, 138–140 (EDY), R181, Y191, and R228. T76 provides a ligand contact to Mg(2+). Residues 192–262 (DADQLSRIVR…VADAALAMLD (71 aa)) form a small ATPAse domain (RuvB-S) region. The head domain (RuvB-H) stretch occupies residues 265–356 (PVGFDLMDRK…RDEWDTPDGK (92 aa)). Residues R301, R320, and R325 each contribute to the DNA site.

Belongs to the RuvB family. As to quaternary structure, homohexamer. Forms an RuvA(8)-RuvB(12)-Holliday junction (HJ) complex. HJ DNA is sandwiched between 2 RuvA tetramers; dsDNA enters through RuvA and exits via RuvB. An RuvB hexamer assembles on each DNA strand where it exits the tetramer. Each RuvB hexamer is contacted by two RuvA subunits (via domain III) on 2 adjacent RuvB subunits; this complex drives branch migration. In the full resolvosome a probable DNA-RuvA(4)-RuvB(12)-RuvC(2) complex forms which resolves the HJ.

It is found in the cytoplasm. The enzyme catalyses ATP + H2O = ADP + phosphate + H(+). Its function is as follows. The RuvA-RuvB-RuvC complex processes Holliday junction (HJ) DNA during genetic recombination and DNA repair, while the RuvA-RuvB complex plays an important role in the rescue of blocked DNA replication forks via replication fork reversal (RFR). RuvA specifically binds to HJ cruciform DNA, conferring on it an open structure. The RuvB hexamer acts as an ATP-dependent pump, pulling dsDNA into and through the RuvAB complex. RuvB forms 2 homohexamers on either side of HJ DNA bound by 1 or 2 RuvA tetramers; 4 subunits per hexamer contact DNA at a time. Coordinated motions by a converter formed by DNA-disengaged RuvB subunits stimulates ATP hydrolysis and nucleotide exchange. Immobilization of the converter enables RuvB to convert the ATP-contained energy into a lever motion, pulling 2 nucleotides of DNA out of the RuvA tetramer per ATP hydrolyzed, thus driving DNA branch migration. The RuvB motors rotate together with the DNA substrate, which together with the progressing nucleotide cycle form the mechanistic basis for DNA recombination by continuous HJ branch migration. Branch migration allows RuvC to scan DNA until it finds its consensus sequence, where it cleaves and resolves cruciform DNA. This chain is Holliday junction branch migration complex subunit RuvB, found in Burkholderia cenocepacia (strain ATCC BAA-245 / DSM 16553 / LMG 16656 / NCTC 13227 / J2315 / CF5610) (Burkholderia cepacia (strain J2315)).